A 189-amino-acid polypeptide reads, in one-letter code: uncharacterized protein (189 aa).

This is an uncharacterized protein from Aquifex aeolicus (strain VF5).